The following is a 937-amino-acid chain: Protein translocase subunit SecA (937 aa).

ATP is bound by residues glutamine 86, 104-108 (GEGKT), and aspartate 493. The segment at 868–889 (LERPSQPTKLAYSAPSEDGDAE) is disordered. Zn(2+) contacts are provided by cysteine 911, cysteine 913, cysteine 922, and histidine 923. The interval 915 to 937 (SGKKFKQCHGRPGGPTGLTARVS) is disordered.

Belongs to the SecA family. As to quaternary structure, monomer and homodimer. Part of the essential Sec protein translocation apparatus which comprises SecA, SecYEG and auxiliary proteins SecDF. Other proteins may also be involved. Zn(2+) is required as a cofactor.

Its subcellular location is the cell membrane. The protein localises to the cytoplasm. The catalysed reaction is ATP + H2O + cellular proteinSide 1 = ADP + phosphate + cellular proteinSide 2.. In terms of biological role, part of the Sec protein translocase complex. Interacts with the SecYEG preprotein conducting channel. Has a central role in coupling the hydrolysis of ATP to the transfer of proteins into and across the cell membrane, serving as an ATP-driven molecular motor driving the stepwise translocation of polypeptide chains across the membrane. This is Protein translocase subunit SecA from Nocardioides sp. (strain ATCC BAA-499 / JS614).